The primary structure comprises 209 residues: Probable septum site-determining protein MinC (209 aa).

It belongs to the MinC family. As to quaternary structure, interacts with MinD and FtsZ.

Cell division inhibitor that blocks the formation of polar Z ring septums. Rapidly oscillates between the poles of the cell to destabilize FtsZ filaments that have formed before they mature into polar Z rings. Prevents FtsZ polymerization. The chain is Probable septum site-determining protein MinC from Clostridium kluyveri (strain NBRC 12016).